The primary structure comprises 565 residues: Proline--tRNA ligase (565 aa).

This sequence belongs to the class-II aminoacyl-tRNA synthetase family. ProS type 1 subfamily. As to quaternary structure, homodimer.

The protein localises to the cytoplasm. It carries out the reaction tRNA(Pro) + L-proline + ATP = L-prolyl-tRNA(Pro) + AMP + diphosphate. Catalyzes the attachment of proline to tRNA(Pro) in a two-step reaction: proline is first activated by ATP to form Pro-AMP and then transferred to the acceptor end of tRNA(Pro). As ProRS can inadvertently accommodate and process non-cognate amino acids such as alanine and cysteine, to avoid such errors it has two additional distinct editing activities against alanine. One activity is designated as 'pretransfer' editing and involves the tRNA(Pro)-independent hydrolysis of activated Ala-AMP. The other activity is designated 'posttransfer' editing and involves deacylation of mischarged Ala-tRNA(Pro). The misacylated Cys-tRNA(Pro) is not edited by ProRS. This is Proline--tRNA ligase from Francisella tularensis subsp. tularensis (strain WY96-3418).